The following is a 655-amino-acid chain: MGIFSIANQHIRFAVKLATAIVLALFVGFHFQLETPRWAVLTAAIVAAGPAFAAGGEPYSGAIRYRGFLRIIGTFIGCIAGLVIIIAMIRAPLLMILVCCIWAGFCTWISSLVRIENSYAWGLAGYTALIIVITIQPEPLLTPQFAVERCSEIVIGIVCAIMADLLFSPRSIKQEVDRELESLLVAQYQLMQLCIKHGDGEVVDKAWGDLVRRTTALQGMRSNLNMESSRWARANRRLKAINTLSLTLITQSCETYLIQNTRPELITDTFREFFDTPVETAQDVHKQLKRLRRVIAWTGERETPVTIYSWVAAATRYQLLKRGVISNTKINATEEEILQGEPEVKVESAERHHAMVNFWRTTLSCILGTLFWLWTGWTSGSGAMVMIAVVTSLAMRLPNPRMVAIDFIYGTLAALPLGLLYFLVIIPNTQQSMLLLCISLAVLGFFLGIEVQKRRLGSMGALASTINIIVLDNPMTFHFSQFLDSALGQIVGCVLAFTVILLVRDKSRDRTGRVLLNQFVSAAVSAMTTNVARRKENHLPALYQQLFLLMNKFPGDLPKFRLALTMIIAHQRLRDAPIPVNEDLSAFHRQMRRTADHVISARSDDKRRRYFGQLLEELEIYQEKLRIWQAPPQVTEPVHRLTGMLHKYQHALTDS.

11 helical membrane passes run 13–33, 38–58, 69–89, 93–113, 121–141, 152–172, 370–390, 407–427, 431–451, 459–479, and 482–502; these read FAVKLATAIVLALFVGFHFQL, WAVLTAAIVAAGPAFAAGGEP, LRIIGTFIGCIAGLVIIIAMI, LLMILVCCIWAGFCTWISSLV, WGLAGYTALIIVITIQPEPLL, EIVIGIVCAIMADLLFSPRSI, LFWLWTGWTSGSGAMVMIAVV, FIYGTLAALPLGLLYFLVIIP, QSMLLLCISLAVLGFFLGIEV, MGALASTINIIVLDNPMTFHF, and FLDSALGQIVGCVLAFTVILL.

This sequence belongs to the aromatic acid exporter ArAE (TC 2.A.85) family.

The protein resides in the cell inner membrane. In terms of biological role, forms an efflux pump with AaeA. Could function as a metabolic relief valve, allowing to eliminate certain compounds when they accumulate to high levels in the cell. In Escherichia coli (strain SMS-3-5 / SECEC), this protein is p-hydroxybenzoic acid efflux pump subunit AaeB.